The following is a 254-amino-acid chain: Alcohol dehydrogenase (254 aa).

Position 10–33 (10–33 (FVAGLGGIGLDTSREIVKSGPKNL)) interacts with NAD(+). Substrate is bound at residue Ser-138. The active-site Proton acceptor is Tyr-151.

This sequence belongs to the short-chain dehydrogenases/reductases (SDR) family. As to quaternary structure, homodimer.

It carries out the reaction a primary alcohol + NAD(+) = an aldehyde + NADH + H(+). The catalysed reaction is a secondary alcohol + NAD(+) = a ketone + NADH + H(+). This is Alcohol dehydrogenase (Adh) from Drosophila nigra (Fruit fly).